Consider the following 131-residue polypeptide: Small ribosomal subunit protein uS8 (131 aa).

It belongs to the universal ribosomal protein uS8 family. As to quaternary structure, part of the 30S ribosomal subunit. Contacts proteins S5 and S12.

In terms of biological role, one of the primary rRNA binding proteins, it binds directly to 16S rRNA central domain where it helps coordinate assembly of the platform of the 30S subunit. The polypeptide is Small ribosomal subunit protein uS8 (Polaromonas naphthalenivorans (strain CJ2)).